Reading from the N-terminus, the 72-residue chain is Probable protein transport protein Sec61 subunit gamma (72 aa).

Residues 1–40 (MSQKLQKPSFLSEYLRSIRLFSKKCVRPSGKELSMSIKRH) lie on the Cytoplasmic side of the membrane. Residues 41–61 (AIGIGFLGILGYAIKLIHIPI) traverse the membrane as a helical segment. Topologically, residues 62–72 (NNIIVSSPGKE) are extracellular.

It belongs to the SecE/SEC61-gamma family. As to quaternary structure, heterotrimeric complex composed of SEC61-alpha, SEC61-beta and SEC61-gamma.

It is found in the endoplasmic reticulum membrane. Functionally, necessary for protein translocation in the endoplasmic reticulum. The sequence is that of Probable protein transport protein Sec61 subunit gamma from Encephalitozoon cuniculi (strain GB-M1) (Microsporidian parasite).